A 533-amino-acid polypeptide reads, in one-letter code: Protein translocase subunit SecD (533 aa).

6 helical membrane passes run 8–28, 377–397, 400–420, 422–442, 469–489, and 495–515; these read ALLV…TFVS, IVGG…GGVV, LALA…GFTL, LPGI…NVLI, LTIL…LQFG, and GFAV…IFVT.

It belongs to the SecD/SecF family. SecD subfamily. As to quaternary structure, forms a complex with SecF. Part of the essential Sec protein translocation apparatus which comprises SecA, SecYEG and auxiliary proteins SecDF-YajC and YidC.

It localises to the cell inner membrane. In terms of biological role, part of the Sec protein translocase complex. Interacts with the SecYEG preprotein conducting channel. SecDF uses the proton motive force (PMF) to complete protein translocation after the ATP-dependent function of SecA. The polypeptide is Protein translocase subunit SecD (Syntrophobacter fumaroxidans (strain DSM 10017 / MPOB)).